The following is a 199-amino-acid chain: Ras-related and estrogen-regulated growth inhibitor (199 aa).

GTP contacts are provided by residues 13 to 20, 60 to 64, and 118 to 121; these read GRAGVGKS, DTAGQ, and NKAD.

The protein belongs to the small GTPase superfamily. Ras family.

It localises to the cytoplasm. It carries out the reaction GTP + H2O = GDP + phosphate + H(+). Functionally, binds GDP/GTP and possesses intrinsic GTPase activity. Has higher affinity for GDP than for GTP. In Bos taurus (Bovine), this protein is Ras-related and estrogen-regulated growth inhibitor (RERG).